A 1215-amino-acid polypeptide reads, in one-letter code: Inner capsid protein VP3 (1215 aa).

Residues 1–81 form a disordered region; it reads MPRRPRRNAK…RVDNDGDVIT (81 aa). Over residues 21-44 the composition is skewed to low complexity; it reads LVAPAANASVSSTVNTTTSPTLAA. The C2H2-type zinc-finger motif lies at 118 to 141; that stretch reads YRCNVCNAEFPSMSAMTEHLRTSH.

This sequence belongs to the turreted BTV-fold inner capsid family. As to quaternary structure, homodecamer; each decamer is made up of two conformers of VP2, called VP2A and VP2B. 12 homodecamers assemble to form an icosahedral capsid. Interacts with VP6.

Its subcellular location is the virion. Its function is as follows. Inner capsid protein that self-assembles to form an icosahedral capsid with a T=2 symmetry, which consists of 120 copies of VP2, with channels at each of its five-fold vertices. This capsid constitutes the innermost concentric layer of the viral mature particle. The chain is Inner capsid protein VP3 (S3) from Ctenopharyngodon idella (Grass carp).